The sequence spans 205 residues: Recombination protein RecR (205 aa).

The C4-type zinc finger occupies 64–79 (CSRCYFITQNDLCAIC). In terms of domain architecture, Toprim spans 87–182 (RIVCVVEEPL…RVTRLARGLP (96 aa)).

The protein belongs to the RecR family.

In terms of biological role, may play a role in DNA repair. It seems to be involved in an RecBC-independent recombinational process of DNA repair. It may act with RecF and RecO. This chain is Recombination protein RecR, found in Roseiflexus castenholzii (strain DSM 13941 / HLO8).